The chain runs to 413 residues: Phosphoglycerate kinase (413 aa).

Substrate contacts are provided by residues 24–26 (DFN), arginine 39, 62–65 (HLSR), arginine 123, and arginine 165. Residues lysine 216, glutamate 343, and 369–372 (GGDS) each bind ATP.

It belongs to the phosphoglycerate kinase family. In terms of assembly, monomer.

The protein localises to the cytoplasm. It catalyses the reaction (2R)-3-phosphoglycerate + ATP = (2R)-3-phospho-glyceroyl phosphate + ADP. The protein operates within carbohydrate degradation; glycolysis; pyruvate from D-glyceraldehyde 3-phosphate: step 2/5. This is Phosphoglycerate kinase from Mycoplasmoides gallisepticum (strain R(low / passage 15 / clone 2)) (Mycoplasma gallisepticum).